The primary structure comprises 35 residues: Cytochrome c-550 (35 aa).

Heme c contacts are provided by C17, C20, and H21.

Post-translationally, binds 1 heme c group covalently per subunit.

Its function is as follows. Monoheme cytochrome which functions as an electron carrier in the reduction of nitrite by membrane vesicles. This chain is Cytochrome c-550, found in Virgibacillus halodenitrificans (Bacillus halodenitrificans).